The sequence spans 159 residues: 2-C-methyl-D-erythritol 2,4-cyclodiphosphate synthase (159 aa).

A divalent metal cation-binding residues include Asp-10 and His-12. 4-CDP-2-C-methyl-D-erythritol 2-phosphate contacts are provided by residues 10–12 (DVH) and 36–37 (HS). His-44 contacts a divalent metal cation. Residues 58 to 60 (DIG), 134 to 137 (TTTE), Phe-141, and Arg-144 each bind 4-CDP-2-C-methyl-D-erythritol 2-phosphate.

Belongs to the IspF family. Homotrimer. A divalent metal cation is required as a cofactor.

The catalysed reaction is 4-CDP-2-C-methyl-D-erythritol 2-phosphate = 2-C-methyl-D-erythritol 2,4-cyclic diphosphate + CMP. The protein operates within isoprenoid biosynthesis; isopentenyl diphosphate biosynthesis via DXP pathway; isopentenyl diphosphate from 1-deoxy-D-xylulose 5-phosphate: step 4/6. Functionally, involved in the biosynthesis of isopentenyl diphosphate (IPP) and dimethylallyl diphosphate (DMAPP), two major building blocks of isoprenoid compounds. Catalyzes the conversion of 4-diphosphocytidyl-2-C-methyl-D-erythritol 2-phosphate (CDP-ME2P) to 2-C-methyl-D-erythritol 2,4-cyclodiphosphate (ME-CPP) with a corresponding release of cytidine 5-monophosphate (CMP). This Bacteroides fragilis (strain YCH46) protein is 2-C-methyl-D-erythritol 2,4-cyclodiphosphate synthase.